Here is a 162-residue protein sequence, read N- to C-terminus: Caveolin-2 (162 aa).

Residues 1 to 86 (MGLETEKADV…FEISKYVIYK (86 aa)) lie on the Cytoplasmic side of the membrane. The residue at position 19 (tyrosine 19) is a Phosphotyrosine; by SRC. Residues serine 20 and serine 23 each carry the phosphoserine modification. Tyrosine 27 carries the post-translational modification Phosphotyrosine; by SRC. The helical intramembrane region spans 87–107 (FLTVFLAIPLAFVAGILFATL). The Cytoplasmic segment spans residues 108–162 (SCLHIWIIMPFVKTCLMLLPSVQTIWKSVTDVVIAPLCTSAGRSFSSVSLQLSHD).

The protein belongs to the caveolin family. In terms of assembly, monomer or homodimer. Interacts with CAV1; the interaction forms a stable heterooligomeric complex that is required for targeting to lipid rafts and for caveolae formation. Tyrosine phosphorylated forms do not form heterooligomers with the Tyr-19-phosphorylated form existing as a monomer or dimer, and the Tyr-27-form as a monomer only. Interacts (tyrosine phosphorylated form) with the SH2 domain-containing proteins, RASA1, NCK1 and SRC. Interacts (tyrosine phosphorylated form) with INSR, the interaction (Tyr-27-phosphorylated form) is increased on insulin stimulation. Interacts (Tyr-19 phosphorylated form) with MAPK1 (phosphorylated form); the interaction, promoted by insulin, leads to nuclear location and MAPK1 activation. Interacts with STAT3; the interaction is increased on insulin-induced tyrosine phosphorylation leading to STAT activation. Post-translationally, phosphorylated on serine and tyrosine residues. CAV1 promotes phosphorylation on Ser-23 which then targets the complex to the plasma membrane, lipid rafts and caveolae. Phosphorylation on both Tyr-19 and Tyr-27 is required for insulin-induced 'Ser-727' phosphorylation of STAT3 and its activation. Phosphorylation on Tyr-19 is required for insulin-induced phosphorylation of MAPK1 and DNA binding of STAT3. Tyrosine phosphorylation is induced by both EGF and insulin.

It is found in the nucleus. It localises to the cytoplasm. Its subcellular location is the golgi apparatus membrane. The protein resides in the cell membrane. The protein localises to the membrane. It is found in the caveola. Functionally, may act as a scaffolding protein within caveolar membranes. Interacts directly with G-protein alpha subunits and can functionally regulate their activity. Acts as an accessory protein in conjunction with CAV1 in targeting to lipid rafts and driving caveolae formation. Positive regulator of cellular mitogenesis of the MAPK signaling pathway. Required for the insulin-stimulated nuclear translocation and activation of MAPK1 and STAT3, and the subsequent regulation of cell cycle progression. The protein is Caveolin-2 (CAV2) of Equus caballus (Horse).